The chain runs to 904 residues: MLIKLLTKVFGSRNDRTLRRMRKVVDLINRMEPEVEKLTNEELRAKTDEFRERLANGAVLETLIPEAFAVVREASKRVFGMRHFDVQLLGGMVLNERCIAEMRTGEGKTLTATLPAYLNALSGRGVHVVTVNDYLAQRDAENNRPLFEFLGLSVGINLPNMPAPAKRAAYAADITYGTNNEFGFDYLRDNMAFSPEERVQRKLHYALVDEVDSILIDEARTPLIISGPAEDSSEMYIRVNKLIPKLIRQEKEDSDTFQGEGHFSVDEKSRQVHLTERGLIKIEEMLVEAGIMEEGESLYSPANIMLMHHVTAALRAHVLFTRDVDYIVKDGEVIIVDEHTGRTMQGRRWSDGLHQAVEAKEGVEIQNENQTLASITFQNYFRLYEKLAGMTGTADTEAFEFSSIYKLDTIVVPTNRPMIRKDLADLVYMTEQEKIGAIIEDIRERTANGQPVLVGTISIEKSEVVSAELTKAGIEHKVLNAKFHAMEAEIVSQAGQPGAVTIATNMAGRGTDIVLGGSWQSEIALLENPTEDQIAAIKAAWQIRHDAVLASGGLHIIGTERHESRRIDNQLRGRAGRQGDAGSSRFYLSMEDALMRIFASDRVSGMMRKLGMKPGEAIEHPWVTKAIANAQRKVESRNFDIRKQLLEYDDVASDQRRAIYSQRNELLDVADVSETINSIREDVFKTVIDSYIPTQSLEEMWDVEGLEQRLKNDFDLDMPIAQWLEDEPQLHEETLRERILQLAIADYQRKEEVVGFDMMRNFEKGVMLQTLDSLWKEHLAAMDYLRQGIHLRGYAQKDPKQEYKRESFAMFAAMLESLKYEVISVLSKVQVRMPEEVEALEVQRREEAERLAKQQQLSHESDNSALMSQEEANVAASLERKVGRNDPCPCGSGKKYKQCHGRLQ.

Residues glutamine 87, 105 to 109, and aspartate 512 contribute to the ATP site; that span reads GEGKT. The disordered stretch occupies residues 851-904; sequence LAKQQQLSHESDNSALMSQEEANVAASLERKVGRNDPCPCGSGKKYKQCHGRLQ. A compositionally biased stretch (polar residues) spans 853–871; that stretch reads KQQQLSHESDNSALMSQEE. Residues cysteine 888, cysteine 890, cysteine 899, and histidine 900 each contribute to the Zn(2+) site. Residues 894–904 show a composition bias toward basic residues; it reads KKYKQCHGRLQ.

Belongs to the SecA family. As to quaternary structure, monomer and homodimer. Part of the essential Sec protein translocation apparatus which comprises SecA, SecYEG and auxiliary proteins SecDF-YajC and YidC. It depends on Zn(2+) as a cofactor.

It localises to the cell inner membrane. The protein resides in the cytoplasm. The catalysed reaction is ATP + H2O + cellular proteinSide 1 = ADP + phosphate + cellular proteinSide 2.. In terms of biological role, part of the Sec protein translocase complex. Interacts with the SecYEG preprotein conducting channel. Has a central role in coupling the hydrolysis of ATP to the transfer of proteins into and across the cell membrane, serving both as a receptor for the preprotein-SecB complex and as an ATP-driven molecular motor driving the stepwise translocation of polypeptide chains across the membrane. This Yersinia enterocolitica serotype O:8 / biotype 1B (strain NCTC 13174 / 8081) protein is Protein translocase subunit SecA.